The chain runs to 517 residues: Synaptic vesicular amine transporter (517 aa).

The Cytoplasmic portion of the chain corresponds to 1–20 (MALSELALLRRLQESRHSRK). Residues 21 to 41 (LILFIVFLALLLDNMLLTVVV) traverse the membrane as a helical segment. Topologically, residues 42 to 132 (PIIPSYLYSI…EDKDLLNENV (91 aa)) are extracellular. 3 N-linked (GlcNAc...) asparagine glycosylation sites follow: Asn-84, Asn-91, and Asn-112. An intrachain disulfide couples Cys-120 to Cys-327. The helical transmembrane segment at 133-153 (QVGLLFASKATVQLLTNPFIG) threads the bilayer. The Cytoplasmic portion of the chain corresponds to 154-162 (LLTNRIGYP). The helical transmembrane segment at 163-183 (IPMFTGFCIMFISTVMFAFSR) threads the bilayer. The Extracellular portion of the chain corresponds to 184–192 (TYAFLLIAR). The helical transmembrane segment at 193–213 (SLQGIGSSCSSVAGMGMLASV) threads the bilayer. Topologically, residues 214 to 222 (YTDDEERGN) are cytoplasmic. A helical transmembrane segment spans residues 223-245 (AMGIALGGLAMGVLVGPPFGSVL). 2 residues coordinate serotonin: Leu-231 and Val-235. Topologically, residues 246–251 (YEFVGK) are extracellular. The helical transmembrane segment at 252 to 274 (TAPFLVLAALVLLDGAIQLFVLQ) threads the bilayer. Over 275-294 (PSRVQPESQKGTPLTTLLRD) the chain is Cytoplasmic. The chain crosses the membrane as a helical span at residues 295–314 (PYILIAAGSICFANMGIAML). Positions 308, 311, 315, 337, and 344 each coordinate serotonin. The Extracellular segment spans residues 315-331 (EPALPIWMMETMCSHKW). The chain crosses the membrane as a helical span at residues 332–355 (QLGVAFLPASVSYLIGTNVFGILA). Over 356 to 360 (HKMGR) the chain is Cytoplasmic. The chain crosses the membrane as a helical span at residues 361–381 (WLCALLGMIIVGMSILCIPLA). Topologically, residues 382–392 (KNIYGLIAPNF) are extracellular. A helical membrane pass occupies residues 393 to 413 (GVGFAIGMVDSSMMPIMGYLV). Asp-402 lines the serotonin pocket. The Cytoplasmic portion of the chain corresponds to 414-417 (DLRH). Residues 418–438 (VSVYGSVYAIADVAFCMGYAI) traverse the membrane as a helical segment. Tyr-436 contributes to the serotonin binding site. The Extracellular segment spans residues 439–443 (GPSAG). A helical transmembrane segment spans residues 444–465 (GAIAKAIGFPWLMTIIGIIDIL). At 466–517 (FAPLCFFLRSPPAKEEKMAILMDHNCPIKTKMYTQNSSQSHPIGEDEESESD) the chain is on the cytoplasmic side. Phosphoserine; by CK2 is present on residues Ser-514 and Ser-516.

The protein belongs to the major facilitator superfamily. Vesicular transporter family. Interacts with SLC6A3.

It localises to the cytoplasmic vesicle. It is found in the secretory vesicle. The protein resides in the synaptic vesicle membrane. The protein localises to the secretory vesicle membrane. Its subcellular location is the cell projection. It localises to the axon. It is found in the dendrite. The enzyme catalyses serotonin(in) + 2 H(+)(out) = serotonin(out) + 2 H(+)(in). It carries out the reaction dopamine(in) + 2 H(+)(out) = dopamine(out) + 2 H(+)(in). The catalysed reaction is histamine(in) + 2 H(+)(out) = histamine(out) + 2 H(+)(in). With respect to regulation, strongly inhibited by reserpine and tetrabenazine. Also inhibited to a lesser extent by ketanserin and fenfluramine. Reserpine and ketanserin inhibit by blocking the substrate-binding pocket. Tetrabenazine traps SLC18A2/VMAT2 in an occluded conformation and its inhibition is specific to SLC18A2/VMAT2 but not SLC18A1/VMAT1. Functionally, electrogenic antiporter that exchanges one cationic monoamine with two intravesicular protons across the membrane of secretory and synaptic vesicles. Uses the electrochemical proton gradient established by the V-type proton-pump ATPase to accumulate high concentrations of monoamines inside the vesicles prior to their release via exocytosis. Transports a variety of catecholamines such as dopamine, adrenaline and noradrenaline, histamine, and indolamines such as serotonin. Regulates the transvesicular monoaminergic gradient that determines the quantal size. Mediates somatodendritic dopamine release in hippocampal neurons, likely as part of a regulated secretory pathway that integrates retrograde synaptic signals. Acts as a primary transporter for striatal dopamine loading ensuring impulse-dependent release of dopamine at the synaptic cleft. Responsible for histamine and serotonin storage and subsequent corelease from mast cell granules. This Bos taurus (Bovine) protein is Synaptic vesicular amine transporter (SLC18A2).